A 1104-amino-acid polypeptide reads, in one-letter code: Reverse gyrase (1104 aa).

The RG N-terminal-type zinc-finger motif lies at Met1–Ser39. Cys11, Cys14, Cys29, and Cys32 together coordinate Zn(2+). Residues Phe75, Asp78, Gln83, Gly103, Gly105, Lys106, Thr107, and Thr108 each contribute to the ADP site. Residues Gln83 and Ala100–Thr107 each bind ATP. The 156-residue stretch at Ala87–Tyr242 folds into the Helicase ATP-binding domain. Positions Asp203–Asp206 match the DEAD box motif. The insert region stretch occupies residues Gly223–Pro250. One can recognise a Helicase C-terminal domain in the interval Lys300–Val522. The tract at residues Arg390–Pro460 is latch region. A topoisomerase I region spans residues Asp538–Gly1104. The Toprim domain maps to Ser542–Ile699. Glu548 is a Mg(2+) binding site. The RG C-terminal-type zinc finger occupies Leu618 to Asp645. Residues Cys621, Cys624, Cys635, and Cys638 each coordinate Zn(2+). Asp668 contacts Mg(2+). One can recognise a Topo IA-type catalytic domain in the interval Asp715–Met1101. Tyr851 serves as the catalytic O-(5'-phospho-DNA)-tyrosine intermediate.

In the N-terminal section; belongs to the DEAD box helicase family. DDVD subfamily. The protein in the C-terminal section; belongs to the type IA topoisomerase family. In terms of assembly, monomer. The cofactor is Zn(2+). It depends on Mg(2+) as a cofactor.

It is found in the cytoplasm. The catalysed reaction is ATP + H2O = ADP + phosphate + H(+). Its function is as follows. Modifies the topological state of DNA by introducing positive supercoils in an ATP-dependent process. Increases the linking number in steps of +1. Probably recognizes regions with a low GC content which melt and form a ssDNA bubble, allowing the enzyme to bind and cleave the DNA prior to strand passage; the bubble is probably cleaved by 2 reverse gyrase molecules, one on each strand. Positively supercoils DNA with all NTPS, although it strongly prefers ATP. In the presence of non-hydrolyzable ATP analogs it partially relaxes negative supercoils. Has an intrinsic ATPase activity that is stimulated by DNA; ssDNA is most effective. Binds to single-stranded DNA, transiently cleaves and then rejoins the ends, introducing a positive supercoil in the process. The scissile phosphodiester is attacked by the catalytic tyrosine of the enzyme, resulting in the formation of a DNA-(5'-phosphotyrosyl)-enzyme intermediate. The helicase-like domain is a nucleotide-dependent switch that alternates between a physically closed ATP-bound state with a slight preference for dsDNA, and an open ADP-bound state with a high preference for ssDNA. Whole enzyme has a very poor (k-unwind=0.001 sec(-1)) non-processive helicase activity in the 3'-5' direction that works on short substrates, while the isolated helicase domain has a slightly better helicase activity that works in both directions. Probably involved in rewinding DNA strands in regions of the chromosome that have opened up to allow replication, transcription, DNA repair and/or for DNA protection. The protein is Reverse gyrase of Thermotoga maritima (strain ATCC 43589 / DSM 3109 / JCM 10099 / NBRC 100826 / MSB8).